Here is a 290-residue protein sequence, read N- to C-terminus: Bifunctional protein FolD (290 aa).

NADP(+)-binding positions include 164-166 (GRS), S193, and I234.

This sequence belongs to the tetrahydrofolate dehydrogenase/cyclohydrolase family. Homodimer.

It carries out the reaction (6R)-5,10-methylene-5,6,7,8-tetrahydrofolate + NADP(+) = (6R)-5,10-methenyltetrahydrofolate + NADPH. It catalyses the reaction (6R)-5,10-methenyltetrahydrofolate + H2O = (6R)-10-formyltetrahydrofolate + H(+). It participates in one-carbon metabolism; tetrahydrofolate interconversion. Functionally, catalyzes the oxidation of 5,10-methylenetetrahydrofolate to 5,10-methenyltetrahydrofolate and then the hydrolysis of 5,10-methenyltetrahydrofolate to 10-formyltetrahydrofolate. This Cytophaga hutchinsonii (strain ATCC 33406 / DSM 1761 / CIP 103989 / NBRC 15051 / NCIMB 9469 / D465) protein is Bifunctional protein FolD.